We begin with the raw amino-acid sequence, 367 residues long: Aminomethyltransferase (367 aa).

This sequence belongs to the GcvT family. In terms of assembly, the glycine cleavage system is composed of four proteins: P, T, L and H.

The enzyme catalyses N(6)-[(R)-S(8)-aminomethyldihydrolipoyl]-L-lysyl-[protein] + (6S)-5,6,7,8-tetrahydrofolate = N(6)-[(R)-dihydrolipoyl]-L-lysyl-[protein] + (6R)-5,10-methylene-5,6,7,8-tetrahydrofolate + NH4(+). Functionally, the glycine cleavage system catalyzes the degradation of glycine. The protein is Aminomethyltransferase of Saccharopolyspora erythraea (strain ATCC 11635 / DSM 40517 / JCM 4748 / NBRC 13426 / NCIMB 8594 / NRRL 2338).